Here is a 183-residue protein sequence, read N- to C-terminus: ATP synthase subunit b, chloroplastic (183 aa).

Residues 27–49 (LATNLINLTVVVGVLIFFGKGVL) form a helical membrane-spanning segment.

The protein belongs to the ATPase B chain family. As to quaternary structure, F-type ATPases have 2 components, F(1) - the catalytic core - and F(0) - the membrane proton channel. F(1) has five subunits: alpha(3), beta(3), gamma(1), delta(1), epsilon(1). F(0) has four main subunits: a(1), b(1), b'(1) and c(10-14). The alpha and beta chains form an alternating ring which encloses part of the gamma chain. F(1) is attached to F(0) by a central stalk formed by the gamma and epsilon chains, while a peripheral stalk is formed by the delta, b and b' chains.

Its subcellular location is the plastid. It is found in the chloroplast thylakoid membrane. In terms of biological role, f(1)F(0) ATP synthase produces ATP from ADP in the presence of a proton or sodium gradient. F-type ATPases consist of two structural domains, F(1) containing the extramembraneous catalytic core and F(0) containing the membrane proton channel, linked together by a central stalk and a peripheral stalk. During catalysis, ATP synthesis in the catalytic domain of F(1) is coupled via a rotary mechanism of the central stalk subunits to proton translocation. Its function is as follows. Component of the F(0) channel, it forms part of the peripheral stalk, linking F(1) to F(0). The protein is ATP synthase subunit b, chloroplastic of Brachypodium distachyon (Purple false brome).